The sequence spans 667 residues: E3 ubiquitin-protein ligase Midline-1 (667 aa).

The segment at 10–60 (CPICLELLEDPLLLPCAHSLCFNCAHRILVSHCATNEPVESINAFQCPTCR) adopts an RING-type zinc-finger fold. Phosphoserine occurs at positions 92 and 96. B box-type zinc fingers lie at residues 116-165 (KVLC…IEPI) and 172-212 (GLMC…VAAL). Cysteine 119, cysteine 122, cysteine 134, cysteine 137, cysteine 142, cysteine 145, histidine 150, histidine 159, cysteine 175, histidine 178, cysteine 198, and histidine 204 together coordinate Zn(2+). Residues 205-264 (RDHQVAALSERYDKLKQNLESNLTNLIKRNTELETLLAKLIQTCQHVEVNASRQEAKLTE) are a coiled coil. The 60-residue stretch at 320-379 (LKENDHARFLQTAKNITERVSMATASSQVLIPEINLNDTFDTFALDFSREKKLLECLDYL) folds into the COS domain. Positions 381–484 (APNPPTIREE…EPGKLKTNSQ (104 aa)) constitute a Fibronectin type-III domain. Over residues 471-485 (SRSSEPGKLKTNSQP) the composition is skewed to polar residues. The interval 471-524 (SRSSEPGKLKTNSQPFKLDPKSAHRKLKVSHDNLTVERDESSSKKSHTPERFTS) is disordered. Residues 482–659 (NSQPFKLDPK…IITGLPIPDH (178 aa)) enclose the B30.2/SPRY domain. The span at 499–520 (VSHDNLTVERDESSSKKSHTPE) shows a compositional bias: basic and acidic residues. The residue at position 511 (serine 511) is a Phosphoserine.

The protein belongs to the TRIM/RBCC family. In terms of assembly, homodimer or heterodimer with MID2. Interacts with IGBP1.

Its subcellular location is the cytoplasm. The protein resides in the cytoskeleton. The catalysed reaction is S-ubiquitinyl-[E2 ubiquitin-conjugating enzyme]-L-cysteine + [acceptor protein]-L-lysine = [E2 ubiquitin-conjugating enzyme]-L-cysteine + N(6)-ubiquitinyl-[acceptor protein]-L-lysine.. Its function is as follows. Has E3 ubiquitin ligase activity towards IGBP1, promoting its monoubiquitination, which results in deprotection of the catalytic subunit of protein phosphatase PP2A, and its subsequent degradation by polyubiquitination. This is E3 ubiquitin-protein ligase Midline-1 (Mid1) from Mus spretus (Western Mediterranean mouse).